The primary structure comprises 831 residues: G-type lectin S-receptor-like serine/threonine-protein kinase At1g61390 (831 aa).

The first 42 residues, 1–42 (MYKLPQRNCADKQEYTVHMRKMGMVIFACLLLLIIFPTFGYA), serve as a signal peptide directing secretion. The Bulb-type lectin domain maps to 43 to 162 (DINTSSPLSI…VSGKTLWKSF (120 aa)). Residues 43 to 448 (DINTSSPLSI…SSELAGSNRT (406 aa)) lie on the Extracellular side of the membrane. Asn-45, Asn-71, Asn-106, and Asn-112 each carry an N-linked (GlcNAc...) asparagine glycan. One can recognise an EGF-like; atypical domain in the interval 298 to 334 (PTSSCDLYRACGPFGLCVRSRNPKCICLKGFVPKSDD). 2 cysteine pairs are disulfide-bonded: Cys-302–Cys-314 and Cys-308–Cys-322. N-linked (GlcNAc...) asparagine glycans are attached at residues Asn-340, Asn-356, Asn-399, and Asn-446. Residues 353-439 (CHTNSSTKTQ…GESLSLRLAS (87 aa)) form the PAN domain. Disulfide bonds link Cys-392–Cys-413 and Cys-396–Cys-402. A helical transmembrane segment spans residues 449 to 469 (KIILGTTVSLSIFVILVFAAY). Residues 470–831 (KSWRYRTKQN…EITQSVIQGR (362 aa)) lie on the Cytoplasmic side of the membrane. Residues 520-803 (FSSSNKLGQG…ELPSPKQPTF (284 aa)) form the Protein kinase domain. ATP contacts are provided by residues 526–534 (LGQGGFGPV) and Lys-548. 2 positions are modified to phosphoserine: Ser-554 and Ser-569. The interval 609-626 (TLKFEIDWQKRFNIIQGV) is caM-binding. Residue Asp-645 is the Proton acceptor of the active site. Phosphoserine occurs at positions 649 and 662. Thr-679 carries the post-translational modification Phosphothreonine. Phosphoserine occurs at positions 722 and 814.

Belongs to the protein kinase superfamily. Ser/Thr protein kinase family.

The protein resides in the cell membrane. It catalyses the reaction L-seryl-[protein] + ATP = O-phospho-L-seryl-[protein] + ADP + H(+). It carries out the reaction L-threonyl-[protein] + ATP = O-phospho-L-threonyl-[protein] + ADP + H(+). In Arabidopsis thaliana (Mouse-ear cress), this protein is G-type lectin S-receptor-like serine/threonine-protein kinase At1g61390.